A 244-amino-acid chain; its full sequence is MFRCLMQNHQRRALVLFSGGQDSTTCLAWALERYAHVETLGFDYGQRHRVELDARQVVLRELRANFPDWAQRLGDDHLLDLGILAQVGDTAMTSDREIEMQANGLPNTFVPGRNLLFLTLAAALGYRRQLDVLVGGMCETDFSGYPDCRDDTIKSQQVTLGLGLGTRVTIETPLMWLDKAQTWELADRLGGQALVDMVIEHSHTCYLGERGQRHDWGYGCGHCPACALRKNGWERWVAGAAYAD.

17–27 (FSGGQDSTTCL) is a binding site for ATP. Zn(2+) is bound by residues Cys205, Cys220, Cys223, and Cys226.

It belongs to the QueC family. Zn(2+) is required as a cofactor.

It catalyses the reaction 7-carboxy-7-deazaguanine + NH4(+) + ATP = 7-cyano-7-deazaguanine + ADP + phosphate + H2O + H(+). Its pathway is purine metabolism; 7-cyano-7-deazaguanine biosynthesis. In terms of biological role, catalyzes the ATP-dependent conversion of 7-carboxy-7-deazaguanine (CDG) to 7-cyano-7-deazaguanine (preQ(0)). The sequence is that of 7-cyano-7-deazaguanine synthase from Bordetella parapertussis (strain 12822 / ATCC BAA-587 / NCTC 13253).